The primary structure comprises 212 residues: Ribosomal RNA small subunit methyltransferase G (212 aa).

S-adenosyl-L-methionine-binding positions include glycine 80, leucine 85, 131 to 132, and arginine 146; that span reads AE.

Belongs to the methyltransferase superfamily. RNA methyltransferase RsmG family.

The protein localises to the cytoplasm. It carries out the reaction guanosine(527) in 16S rRNA + S-adenosyl-L-methionine = N(7)-methylguanosine(527) in 16S rRNA + S-adenosyl-L-homocysteine. In terms of biological role, specifically methylates the N7 position of guanine in position 527 of 16S rRNA. The chain is Ribosomal RNA small subunit methyltransferase G from Xylella fastidiosa (strain M23).